We begin with the raw amino-acid sequence, 210 residues long: Acyl-homoserine-lactone synthase (210 aa).

Belongs to the autoinducer synthase family.

The catalysed reaction is a fatty acyl-[ACP] + S-adenosyl-L-methionine = an N-acyl-L-homoserine lactone + S-methyl-5'-thioadenosine + holo-[ACP] + H(+). Functionally, required for the synthesis of OHHL (N-(3-oxohexanoyl)-L-homoserine lactone), an autoinducer molecule which binds to EsaR. OHHL is necessary for biosynthesis of EPS virulence factor (extracellular heteropolysaccharide) which plays a role in the development of Stewart's wilt on sweet corn. This is Acyl-homoserine-lactone synthase (esaI) from Pantoea stewartii subsp. stewartii (Erwinia stewartii).